The following is a 314-amino-acid chain: uncharacterized protein (314 aa).

The protein belongs to the carbohydrate kinase PfkB family.

This is an uncharacterized protein from Buchnera aphidicola subsp. Schizaphis graminum (strain Sg).